The sequence spans 610 residues: UvrABC system protein C (610 aa).

Residues 16–94 (SQPGVYRMYD…IKLYQPRYNV (79 aa)) enclose the GIY-YIG domain. The UVR domain maps to 204-239 (DQVLTQLIARMEKASQDLAFEEAARIRDQIQAVRRV).

The protein belongs to the UvrC family. Interacts with UvrB in an incision complex.

It is found in the cytoplasm. Functionally, the UvrABC repair system catalyzes the recognition and processing of DNA lesions. UvrC both incises the 5' and 3' sides of the lesion. The N-terminal half is responsible for the 3' incision and the C-terminal half is responsible for the 5' incision. In Salmonella paratyphi A (strain ATCC 9150 / SARB42), this protein is UvrABC system protein C.